The following is a 262-amino-acid chain: Inner membrane protein YcfZ (262 aa).

At 1–4 (MKKF) the chain is on the cytoplasmic side. Residues 5–27 (IILLSLLILLPLTAASKPLIPIM) traverse the membrane as a helical segment. Residues 28 to 182 (KTLFTDVTGT…HENAPPGSTN (155 aa)) are Periplasmic-facing. A helical transmembrane segment spans residues 183-202 (TLGFIAWAATFILFSRIFYY). Residues 203–206 (TTRF) are Cytoplasmic-facing. The helical transmembrane segment at 207-229 (IYALKFAVAMTIANMGYQALCLY) threads the bilayer. Over 230–238 (IDNSFAITR) the chain is Periplasmic. The helical transmembrane segment at 239 to 258 (ISPLWAGLIGVCTFIAALLL) threads the bilayer. The Cytoplasmic segment spans residues 259–262 (TSKR).

The protein localises to the cell inner membrane. The polypeptide is Inner membrane protein YcfZ (ycfZ) (Escherichia coli (strain K12)).